A 138-amino-acid polypeptide reads, in one-letter code: Putative ribonuclease VapC45 (138 aa).

Toxic component of a type II toxin-antitoxin (TA) system. An RNase. The cognate antitoxin is VapB45. This chain is Putative ribonuclease VapC45, found in Mycobacterium tuberculosis (strain ATCC 25618 / H37Rv).